Consider the following 283-residue polypeptide: Acetylglutamate kinase (283 aa).

Residues 63–64 (GG), Arg-85, and Asn-178 each bind substrate.

This sequence belongs to the acetylglutamate kinase family. ArgB subfamily.

It localises to the cytoplasm. It catalyses the reaction N-acetyl-L-glutamate + ATP = N-acetyl-L-glutamyl 5-phosphate + ADP. It participates in amino-acid biosynthesis; L-arginine biosynthesis; N(2)-acetyl-L-ornithine from L-glutamate: step 2/4. In terms of biological role, catalyzes the ATP-dependent phosphorylation of N-acetyl-L-glutamate. The polypeptide is Acetylglutamate kinase (Prochlorococcus marinus (strain MIT 9215)).